Consider the following 605-residue polypeptide: Elongation factor 4 (605 aa).

Residues 9–192 (HHIRNFCIIA…AIVKRVPAPS (184 aa)) form the tr-type G domain. Residues 21–26 (DHGKST) and 139–142 (NKID) contribute to the GTP site.

The protein belongs to the TRAFAC class translation factor GTPase superfamily. Classic translation factor GTPase family. LepA subfamily.

It is found in the cell inner membrane. It carries out the reaction GTP + H2O = GDP + phosphate + H(+). In terms of biological role, required for accurate and efficient protein synthesis under certain stress conditions. May act as a fidelity factor of the translation reaction, by catalyzing a one-codon backward translocation of tRNAs on improperly translocated ribosomes. Back-translocation proceeds from a post-translocation (POST) complex to a pre-translocation (PRE) complex, thus giving elongation factor G a second chance to translocate the tRNAs correctly. Binds to ribosomes in a GTP-dependent manner. This Chlorobium phaeobacteroides (strain DSM 266 / SMG 266 / 2430) protein is Elongation factor 4.